We begin with the raw amino-acid sequence, 263 residues long: Isoprenyl transferase (263 aa).

The active site involves Asp38. Asp38 is a Mg(2+) binding site. Residues 39 to 42 (GNRR), His55, and 83 to 85 (STD) contribute to the substrate site. Asn86 functions as the Proton acceptor in the catalytic mechanism. Substrate contacts are provided by residues Phe87, Arg89, Arg212, and 218-220 (RLS). Residue Glu231 coordinates Mg(2+).

The protein belongs to the UPP synthase family. As to quaternary structure, homodimer. Mg(2+) is required as a cofactor.

Functionally, catalyzes the condensation of isopentenyl diphosphate (IPP) with allylic pyrophosphates generating different type of terpenoids. In Thermus thermophilus (strain ATCC BAA-163 / DSM 7039 / HB27), this protein is Isoprenyl transferase.